The sequence spans 267 residues: Phosphate import ATP-binding protein PstB 2 (267 aa).

The 242-residue stretch at 21–262 (LTTKDLHVYY…AKCQSTSDYV (242 aa)) folds into the ABC transporter domain. Residue 53 to 60 (GPSGCGKS) participates in ATP binding.

Belongs to the ABC transporter superfamily. Phosphate importer (TC 3.A.1.7) family. The complex is composed of two ATP-binding proteins (PstB), two transmembrane proteins (PstC and PstA) and a solute-binding protein (PstS).

It localises to the cell membrane. The catalysed reaction is phosphate(out) + ATP + H2O = ADP + 2 phosphate(in) + H(+). In terms of biological role, part of the ABC transporter complex PstSACB involved in phosphate import. Responsible for energy coupling to the transport system. This Streptococcus agalactiae serotype Ia (strain ATCC 27591 / A909 / CDC SS700) protein is Phosphate import ATP-binding protein PstB 2.